The chain runs to 845 residues: Extended synaptotagmin-2 (845 aa).

Residues 1–17 are compositionally biased toward gly residues; it reads MSSAGGEGPEAGPGRAG. Positions 1–26 are disordered; the sequence is MSSAGGEGPEAGPGRAGGRSEPEAPG. The Cytoplasmic segment spans residues 1-27; sequence MSSAGGEGPEAGPGRAGGRSEPEAPGS. The helical transmembrane segment at 28–48 threads the bilayer; it reads ALSVDLPGLLGQLARSFALLL. Residues 49 to 51 lie on the Lumenal side of the membrane; it reads PVY. Residues 52-72 traverse the membrane as a helical segment; the sequence is ALGYLGLSFSWVLLALGLLAW. At 73–845 the chain is on the cytoplasmic side; the sequence is CRRSRGLKAS…EDGTRPQVIT (773 aa). Residues 115-294 form the SMP-LTD domain; sequence DTERAEWLNK…LPNRITVPLV (180 aa). 2 C2 domains span residues 293–413 and 442–563; these read LVSE…DEWF and VLAD…QLSN. 9 residues coordinate Ca(2+): Lys324, Asp325, Asp337, Asp384, Glu385, Asp386, Asp388, Asp390, and Asp391. The disordered stretch occupies residues 584–664; the sequence is QERPPDYQHS…RDLGRSSSSL (81 aa). Residues 612-628 are compositionally biased toward polar residues; that stretch reads SQMSASPGTGGANTAPS. Phosphoserine occurs at positions 615 and 617. Position 629 is a phosphothreonine (Thr629). The span at 634-645 shows a compositional bias: basic and acidic residues; the sequence is VDDKPAMEEKPQ. Residues Ser660, Ser662, Ser663, Ser667, Ser679, Ser682, and Ser685 each carry the phosphoserine modification. A C2 3 domain is found at 710–832; it reads PLGQIQLTIR…ELAKGWTQWY (123 aa). Residues 757–764 are required for phosphatidylinositol 4,5-bisphosphate-dependent location at the cell membrane; sequence KRRSGRRK.

The protein belongs to the extended synaptotagmin family. As to quaternary structure, homodimer. Interacts with ESYT1 and ESYT3. Interacts with FGFR1 that has been activated by FGF1 binding. Interacts with the AP-2 complex; identified in a complex with the AP-2 complex and FGFR1.

The protein resides in the cell membrane. It localises to the endoplasmic reticulum membrane. Tethers the endoplasmic reticulum to the cell membrane and promotes the formation of appositions between the endoplasmic reticulum and the cell membrane. Binds glycerophospholipids in a barrel-like domain and may play a role in cellular lipid transport. Plays a role in FGF signaling via its role in the rapid internalization of FGFR1 that has been activated by FGF1 binding; this occurs most likely via the AP-2 complex. Promotes the localization of SACM1L at endoplasmic reticulum-plasma membrane contact sites (EPCS). The sequence is that of Extended synaptotagmin-2 (Esyt2) from Mus musculus (Mouse).